Reading from the N-terminus, the 342-residue chain is Ribosomal RNA small subunit methyltransferase H (342 aa).

S-adenosyl-L-methionine is bound by residues 36-38 (GGH), D56, F82, D100, and Q107. A disordered region spans residues 311-342 (GESGMGKGNSAAASRFPTADSPFPASANGDAA).

This sequence belongs to the methyltransferase superfamily. RsmH family.

It is found in the cytoplasm. It catalyses the reaction cytidine(1402) in 16S rRNA + S-adenosyl-L-methionine = N(4)-methylcytidine(1402) in 16S rRNA + S-adenosyl-L-homocysteine + H(+). Its function is as follows. Specifically methylates the N4 position of cytidine in position 1402 (C1402) of 16S rRNA. This Xanthomonas axonopodis pv. citri (strain 306) protein is Ribosomal RNA small subunit methyltransferase H.